A 218-amino-acid polypeptide reads, in one-letter code: Methylthioribulose-1-phosphate dehydratase (218 aa).

Zn(2+) contacts are provided by histidine 107 and histidine 109.

It belongs to the aldolase class II family. MtnB subfamily. Requires Zn(2+) as cofactor.

The enzyme catalyses 5-(methylsulfanyl)-D-ribulose 1-phosphate = 5-methylsulfanyl-2,3-dioxopentyl phosphate + H2O. It participates in amino-acid biosynthesis; L-methionine biosynthesis via salvage pathway; L-methionine from S-methyl-5-thio-alpha-D-ribose 1-phosphate: step 2/6. Its function is as follows. Catalyzes the dehydration of methylthioribulose-1-phosphate (MTRu-1-P) into 2,3-diketo-5-methylthiopentyl-1-phosphate (DK-MTP-1-P). The sequence is that of Methylthioribulose-1-phosphate dehydratase from Xylella fastidiosa (strain M12).